A 365-amino-acid chain; its full sequence is Undecaprenyl-phosphate alpha-N-acetylglucosaminyl 1-phosphate transferase (365 aa).

The next 10 membrane-spanning stretches (helical) occupy residues 3-23, 45-65, 99-119, 132-152, 157-177, 187-207, 213-233, 242-262, 293-313, and 315-335; these read LLTMSTELIYIFLFSMAFLFV, GLIPLVGGISVFAGVCFAFLI, IRAFVQALVGIAMMAVAGLYL, VLGPFGYVVTLFAVWAAINAF, GIDGLLGGLSCVSFGAMGILL, LWCFAMIATIIPYILLNLGLL, VFMGDAGSTLIGFTAIWILLQ, INPVTALWIIAIPLMDMIAIM, QAFVLITLAAALLAMIGVIGE, and LTFIPEWVMLALFLLAFLLYG.

The protein belongs to the glycosyltransferase 4 family. WecA subfamily. Mg(2+) is required as a cofactor. The cofactor is Mn(2+).

It is found in the cell inner membrane. It catalyses the reaction di-trans,octa-cis-undecaprenyl phosphate + UDP-N-acetyl-alpha-D-glucosamine = N-acetyl-alpha-D-glucosaminyl-di-trans,octa-cis-undecaprenyl diphosphate + UMP. It participates in bacterial outer membrane biogenesis; LPS O-antigen biosynthesis. It functions in the pathway bacterial outer membrane biogenesis; enterobacterial common antigen biosynthesis. In terms of biological role, catalyzes the transfer of the GlcNAc-1-phosphate moiety from UDP-GlcNAc onto the carrier lipid undecaprenyl phosphate (C55-P), yielding GlcNAc-pyrophosphoryl-undecaprenyl (GlcNAc-PP-C55). The protein is Undecaprenyl-phosphate alpha-N-acetylglucosaminyl 1-phosphate transferase of Yersinia pestis.